Reading from the N-terminus, the 266-residue chain is MKAVVLTLAVLFLTGSQARHFWQQDEPQSPWDRVKDLATVYVDVVKDGGRDYVAQFEASALGKQLNLKLLDNWDSLSSTVAKLREQIGPVTQEFWDNLEKETEVLRQEMNKDLEEVKKKVQPYLDEFQSKWHEEVELYRQKVAPLGAELREGARQKLQELQEKLSPLGEELRDRARTHVDALRAQLAPYSEQLRERLAARLQALKEGGGATLTEYHAKASEHLSALREKAKPALEDLRQGLMPVLESFRASLLAAVDEATKKLNAQ.

An N-terminal signal peptide occupies residues 1–18 (MKAVVLTLAVLFLTGSQA). A run of 2 repeats spans residues 67–88 (LKLL…EQIG) and 89–110 (PVTQ…QEMN). Residues 67-266 (LKLLDNWDSL…DEATKKLNAQ (200 aa)) are 10 X approximate tandem repeats. Methionine 109 is subject to Methionine sulfoxide. A 3; half-length repeat occupies 111–121 (KDLEEVKKKVQ). Tandem repeats lie at residues 122 to 143 (PYLD…QKVA), 144 to 165 (PLGA…EKLS), 166 to 187 (PLGE…AQLA), 188 to 209 (PYSE…EGGG), and 210 to 231 (ATLT…EKAK). The 9; half-length repeat unit spans residues 232–242 (PALEDLRQGLM). Residues 243-266 (PVLESFRASLLAAVDEATKKLNAQ) form repeat 10.

The protein belongs to the apolipoprotein A1/A4/E family. Homodimer. Interacts with APOA1BP and CLU. Component of a sperm activating protein complex (SPAP), consisting of APOA1, an immunoglobulin heavy chain, an immunoglobulin light chain and albumin. Interacts with NDRG1. Interacts with SCGB3A2. Interacts with NAXE and YJEFN3. Post-translationally, glycosylated. Palmitoylated. In terms of processing, phosphorylation sites are present in the extracellular medium.

It localises to the secreted. Functionally, participates in the reverse transport of cholesterol from tissues to the liver for excretion by promoting cholesterol efflux from tissues and by acting as a cofactor for the lecithin cholesterol acyltransferase (LCAT). As part of the SPAP complex, activates spermatozoa motility. The polypeptide is Apolipoprotein A-I (APOA1) (Phoca vitulina (Harbor seal)).